A 274-amino-acid polypeptide reads, in one-letter code: UPF0173 metal-dependent hydrolase A2cp1_1196 (274 aa).

Belongs to the UPF0173 family.

This is UPF0173 metal-dependent hydrolase A2cp1_1196 from Anaeromyxobacter dehalogenans (strain 2CP-1 / ATCC BAA-258).